The chain runs to 141 residues: Putative lipoprotein Tanf_09445 (141 aa).

Positions 1 to 20 (MKQKIILWIGALLLLTAGTG) are cleaved as a signal peptide. The N-palmitoyl cysteine moiety is linked to residue Cys21. The S-diacylglycerol cysteine moiety is linked to residue Cys21.

The protein localises to the cell membrane. This chain is Putative lipoprotein Tanf_09445, found in Tannerella forsythia (strain ATCC 43037 / JCM 10827 / CCUG 21028 A / KCTC 5666 / FDC 338) (Bacteroides forsythus).